The sequence spans 162 residues: MTAIQHFFKTFFLTELLKGLALTGRYTFKRKFTVQFPEEKTPISPRFRGLHALRRYENGEERCIACKLCEAVCPALAITIESETRADNTRRTTRYDIDLTKCIFCGFCEESCPVDSIVETQILEYHGEKRGDLYFTKDMLLAVGDRYEKDIAAAKAADAPYR.

2 4Fe-4S ferredoxin-type domains span residues 54-83 (RRYENGEERCIACKLCEAVCPALAITIESE) and 93-122 (TRYDIDLTKCIFCGFCEESCPVDSIVETQI). The [4Fe-4S] cluster site is built by cysteine 63, cysteine 66, cysteine 69, cysteine 73, cysteine 102, cysteine 105, cysteine 108, and cysteine 112.

Belongs to the complex I 23 kDa subunit family. In terms of assembly, NDH-1 is composed of 14 different subunits. Subunits NuoA, H, J, K, L, M, N constitute the membrane sector of the complex. Requires [4Fe-4S] cluster as cofactor.

It is found in the cell inner membrane. It carries out the reaction a quinone + NADH + 5 H(+)(in) = a quinol + NAD(+) + 4 H(+)(out). Functionally, NDH-1 shuttles electrons from NADH, via FMN and iron-sulfur (Fe-S) centers, to quinones in the respiratory chain. The immediate electron acceptor for the enzyme in this species is believed to be ubiquinone. Couples the redox reaction to proton translocation (for every two electrons transferred, four hydrogen ions are translocated across the cytoplasmic membrane), and thus conserves the redox energy in a proton gradient. The sequence is that of NADH-quinone oxidoreductase subunit I from Burkholderia cenocepacia (strain ATCC BAA-245 / DSM 16553 / LMG 16656 / NCTC 13227 / J2315 / CF5610) (Burkholderia cepacia (strain J2315)).